The primary structure comprises 592 residues: A-type ATP synthase subunit A (592 aa).

234 to 241 (GPFGSGKT) serves as a coordination point for ATP.

Belongs to the ATPase alpha/beta chains family. As to quaternary structure, has multiple subunits with at least A(3), B(3), C, D, E, F, H, I and proteolipid K(x).

The protein resides in the cell membrane. The enzyme catalyses ATP + H2O + 4 H(+)(in) = ADP + phosphate + 5 H(+)(out). In terms of biological role, produces ATP from ADP in the presence of a proton gradient across the membrane. The archaeal alpha chain is a catalytic subunit. Its function is as follows. Component of the A-type ATP synthase that produces ATP from ADP in the presence of a proton gradient across the membrane. The A chain is the catalytic subunit. This chain is A-type ATP synthase subunit A, found in Sulfolobus acidocaldarius (strain ATCC 33909 / DSM 639 / JCM 8929 / NBRC 15157 / NCIMB 11770).